A 143-amino-acid chain; its full sequence is Small ribosomal subunit protein uS9A (143 aa).

Position 2 is an N-acetylserine (S2). K30 is covalently cross-linked (Glycyl lysine isopeptide (Lys-Gly) (interchain with G-Cter in ubiquitin)). S34 bears the Phosphoserine mark. Glycyl lysine isopeptide (Lys-Gly) (interchain with G-Cter in ubiquitin) cross-links involve residues K47 and K59. Phosphoserine is present on S61. Position 70 is a phosphothreonine (T70). S76 is subject to Phosphoserine. The tract at residues 123–143 (RPEPKKFGGKGARSRFQKSYR) is disordered. Over residues 134 to 143 (ARSRFQKSYR) the composition is skewed to basic residues.

It belongs to the universal ribosomal protein uS9 family. Component of the small ribosomal subunit (SSU). Mature yeast ribosomes consist of a small (40S) and a large (60S) subunit. The 40S small subunit contains 1 molecule of ribosomal RNA (18S rRNA) and 33 different proteins (encoded by 57 genes). The large 60S subunit contains 3 rRNA molecules (25S, 5.8S and 5S rRNA) and 46 different proteins (encoded by 81 genes).

It localises to the cytoplasm. Its function is as follows. Component of the ribosome, a large ribonucleoprotein complex responsible for the synthesis of proteins in the cell. The small ribosomal subunit (SSU) binds messenger RNAs (mRNAs) and translates the encoded message by selecting cognate aminoacyl-transfer RNA (tRNA) molecules. The large subunit (LSU) contains the ribosomal catalytic site termed the peptidyl transferase center (PTC), which catalyzes the formation of peptide bonds, thereby polymerizing the amino acids delivered by tRNAs into a polypeptide chain. The nascent polypeptides leave the ribosome through a tunnel in the LSU and interact with protein factors that function in enzymatic processing, targeting, and the membrane insertion of nascent chains at the exit of the ribosomal tunnel. In Saccharomyces cerevisiae (strain ATCC 204508 / S288c) (Baker's yeast), this protein is Small ribosomal subunit protein uS9A.